The primary structure comprises 82 residues: UPF0213 protein SSP2268 (82 aa).

Residues 2–77 (DKHYIYIVKC…KTFSRQKKLK (76 aa)) form the GIY-YIG domain.

This sequence belongs to the UPF0213 family.

This is UPF0213 protein SSP2268 from Staphylococcus saprophyticus subsp. saprophyticus (strain ATCC 15305 / DSM 20229 / NCIMB 8711 / NCTC 7292 / S-41).